The sequence spans 143 residues: Transcriptional regulator MraZ (143 aa).

2 SpoVT-AbrB domains span residues threonine 5 to glutamate 47 and alanine 76 to alanine 119.

The protein belongs to the MraZ family. As to quaternary structure, forms oligomers.

The protein localises to the cytoplasm. Its subcellular location is the nucleoid. In Kocuria rhizophila (strain ATCC 9341 / DSM 348 / NBRC 103217 / DC2201), this protein is Transcriptional regulator MraZ.